The sequence spans 245 residues: Protein mlo1 (245 aa).

In terms of domain architecture, SAP spans 4-38 (YKSLKVAELREKLAEKGLSTAGNKAELVSRLTAAT). The interval 32–245 (SRLTAATESN…AERFGVAAKN (214 aa)) is disordered. Residues 37 to 52 (ATESNDENTSNNNATD) are compositionally biased toward low complexity. The segment covering 58–70 (PPEDDIDWGDMEN) has biased composition (acidic residues). Residues 109–118 (TSQAPETSTG) show a composition bias toward polar residues. The span at 119 to 130 (AEEHQETTEESK) shows a compositional bias: basic and acidic residues. At serine 139 the chain carries Phosphoserine. Positions 182 to 196 (SSNNKNHNQSKNPQN) are enriched in low complexity.

The protein belongs to the SAP domain-containing ribonucleoprotein family.

This chain is Protein mlo1 (mlo1), found in Schizosaccharomyces pombe (strain 972 / ATCC 24843) (Fission yeast).